We begin with the raw amino-acid sequence, 295 residues long: AP-1-like transcription factor YAP4 (295 aa).

Phosphoserine occurs at positions 85, 89, and 196. Over residues 181–202 (ASYFPSNSTPATRKNSATTNLP) the composition is skewed to polar residues. Positions 181 to 205 (ASYFPSNSTPATRKNSATTNLPSEE) are disordered. A bZIP domain is found at 237 to 295 (PLRNTKRAAQNRSAQKAFRQRREKYIKNLEEKSKLFDGLMKENSELKKMIESLKSKLKE). Residues 239–260 (RNTKRAAQNRSAQKAFRQRREK) form a basic motif region. Residues 262 to 271 (IKNLEEKSKL) form a leucine-zipper region.

It belongs to the bZIP family. YAP subfamily. As to quaternary structure, homodimer.

The protein localises to the cytoplasm. It localises to the nucleus. Transcription activator involved in the regulation of genes expressed in response to environmental changes and metabolic requirements. According to genome-wide promoter binding and gene expression studies it regulates, among others, genes involved in ribosome biogenesis, and protein synthesis. It may also be involved in pleiotropic drug resistance. When overexpressed it confers increased resistance to cisplatin, the DNA-alkylating agents methylmethanosulfonate, and mitomycin C, the antimalarial drugs quinidine, mefloquine, and chloroquine, and increases cellular tolerance to sodium and lithium. Preferentially binds 5'-TTACTAA-3'. The sequence is that of AP-1-like transcription factor YAP4 (CIN5) from Saccharomyces cerevisiae (strain ATCC 204508 / S288c) (Baker's yeast).